The following is a 403-amino-acid chain: Na(+)-translocating NADH-quinone reductase subunit B (403 aa).

The next 9 membrane-spanning stretches (helical) occupy residues 56-76 (MMIT…WNTG), 121-141 (AYFL…EVLF), 163-183 (ILPP…GVVI), 220-240 (WTAV…SGGI), 265-285 (TSTL…IASW), 287-307 (IVSG…LIGS), 312-332 (MFAM…GMFF), 348-368 (WIFG…NPAF), and 371-391 (GMML…HFVV). Threonine 230 bears the FMN phosphoryl threonine mark.

The protein belongs to the NqrB/RnfD family. In terms of assembly, composed of six subunits; NqrA, NqrB, NqrC, NqrD, NqrE and NqrF. FMN is required as a cofactor.

It is found in the cell inner membrane. It carries out the reaction a ubiquinone + n Na(+)(in) + NADH + H(+) = a ubiquinol + n Na(+)(out) + NAD(+). Its function is as follows. NQR complex catalyzes the reduction of ubiquinone-1 to ubiquinol by two successive reactions, coupled with the transport of Na(+) ions from the cytoplasm to the periplasm. NqrA to NqrE are probably involved in the second step, the conversion of ubisemiquinone to ubiquinol. In Ectopseudomonas mendocina (strain ymp) (Pseudomonas mendocina), this protein is Na(+)-translocating NADH-quinone reductase subunit B.